A 204-amino-acid polypeptide reads, in one-letter code: Ribosomal RNA small subunit methyltransferase J (204 aa).

S-adenosyl-L-methionine contacts are provided by residues 55 to 56 (RD), 71 to 72 (ER), and Asp-123.

This sequence belongs to the methyltransferase superfamily. RsmJ family.

It localises to the cytoplasm. The catalysed reaction is guanosine(1516) in 16S rRNA + S-adenosyl-L-methionine = N(2)-methylguanosine(1516) in 16S rRNA + S-adenosyl-L-homocysteine + H(+). Functionally, specifically methylates the guanosine in position 1516 of 16S rRNA. This Rhodopseudomonas palustris (strain ATCC BAA-98 / CGA009) protein is Ribosomal RNA small subunit methyltransferase J.